The following is a 35-amino-acid chain: Dolichyl-diphosphooligosaccharide--protein glycosyltransferase subunit 4C (35 aa).

The Lumenal portion of the chain corresponds to 1-8 (MFDDQDLG). A helical transmembrane segment spans residues 9–29 (FFANFLGIFIFILVIAYHFVM). Over 30–35 (ADPKFE) the chain is Cytoplasmic.

This sequence belongs to the OST4 family. As to quaternary structure, component of the oligosaccharyltransferase (OST) complex.

Its subcellular location is the endoplasmic reticulum membrane. Subunit of the oligosaccharyl transferase (OST) complex that catalyzes the initial transfer of a defined glycan (Glc(3)Man(9)GlcNAc(2) in eukaryotes) from the lipid carrier dolichol-pyrophosphate to an asparagine residue within an Asn-X-Ser/Thr consensus motif in nascent polypeptide chains, the first step in protein N-glycosylation. N-glycosylation occurs cotranslationally and the complex associates with the Sec61 complex at the channel-forming translocon complex that mediates protein translocation across the endoplasmic reticulum (ER). All subunits are required for a maximal enzyme activity. This is Dolichyl-diphosphooligosaccharide--protein glycosyltransferase subunit 4C (OST4C) from Arabidopsis thaliana (Mouse-ear cress).